The sequence spans 102 residues: ATP-dependent Clp protease adapter protein ClpS (102 aa).

It belongs to the ClpS family. Binds to the N-terminal domain of the chaperone ClpA.

Involved in the modulation of the specificity of the ClpAP-mediated ATP-dependent protein degradation. In Dechloromonas aromatica (strain RCB), this protein is ATP-dependent Clp protease adapter protein ClpS.